The primary structure comprises 982 residues: Filament-like plant protein 4 (982 aa).

Coiled coils occupy residues 39 to 83 (DQYT…VAKE) and 125 to 291 (EDRA…RKKL). The disordered stretch occupies residues 311–333 (DHRQDHRQRRSPVRPSSPLMSPM). Residues 323–333 (VRPSSPLMSPM) are compositionally biased toward low complexity. Residues 345–401 (DNMQKFHKENDLLTERLLAMEEETKMLKEALAKRNSELQVSRNLCAKTANRLQTLEA) are a coiled coil. Polar residues predominate over residues 423 to 433 (QNASNPPSMAS). Disordered regions lie at residues 423–466 (QNAS…AKIK) and 687–711 (QKDS…PDDC). Positions 452–475 (ELSQSNKDKANAKIKKTESANQLE) form a coiled coil. The span at 457–466 (NKDKANAKIK) shows a compositional bias: basic and acidic residues. The span at 693 to 705 (EHYQNGCSQSSDS) shows a compositional bias: polar residues. Residues 722-885 (ATCKFTTEEF…AECQETILLL (164 aa)) adopt a coiled-coil conformation. Composition is skewed to polar residues over residues 896–910 (TEQV…QQAL) and 918–943 (ATST…NTMK). The interval 896–982 (TEQVASSPSQ…FSRFFSTKAK (87 aa)) is disordered.

This sequence belongs to the FPP family. As to quaternary structure, interacts with WPP/MAF proteins.

This chain is Filament-like plant protein 4 (FPP4), found in Arabidopsis thaliana (Mouse-ear cress).